The following is a 322-amino-acid chain: MTSLSWLRALDVADIAAITDLLAAAERADGNGGVSEDVRLTLRPGPVGGGVEHLVARAGSAVVGYAALGGTATERQAELVVHPDHRRRGVGTALVHALFATTSPVSLNIWAHGDTPAAAALATRNGFDRERVLLQLRRPLASVRPGDPDDLPRPIIPADVTIRAFEVGVDEEAWLAVNAEAFADHPEQGRWTLDDLRAREGEPWFDPAGFFLAERNGALLGFHWTKVHPQDPVPEHPAATDQPAGQPGPIGEVYVVGVASAAAGTGLGAALTIVGLRHLRDIGLASVMLYVDEDNARAVRLYTRLGFRRHAADVSYRRPARG.

N-acetyltransferase domains lie at 5–150 (SWLR…DPDD) and 160–322 (VTIR…PARG). Glutamate 36 contacts 1D-myo-inositol 2-(L-cysteinylamino)-2-deoxy-alpha-D-glucopyranoside. Acetyl-CoA-binding positions include 79 to 81 (LVV) and 87 to 92 (RRGVGT). Residues glutamate 187, lysine 226, and glutamate 252 each coordinate 1D-myo-inositol 2-(L-cysteinylamino)-2-deoxy-alpha-D-glucopyranoside. 256–258 (VGV) contributes to the acetyl-CoA binding site. Tyrosine 290 lines the 1D-myo-inositol 2-(L-cysteinylamino)-2-deoxy-alpha-D-glucopyranoside pocket. 295-300 (NARAVR) contacts acetyl-CoA.

Belongs to the acetyltransferase family. MshD subfamily. In terms of assembly, monomer.

It catalyses the reaction 1D-myo-inositol 2-(L-cysteinylamino)-2-deoxy-alpha-D-glucopyranoside + acetyl-CoA = mycothiol + CoA + H(+). Functionally, catalyzes the transfer of acetyl from acetyl-CoA to desacetylmycothiol (Cys-GlcN-Ins) to form mycothiol. This chain is Mycothiol acetyltransferase, found in Parafrankia sp. (strain EAN1pec).